Reading from the N-terminus, the 158-residue chain is uncharacterized protein (158 aa).

The region spanning 12–73 is the HTH asnC-type domain; the sequence is LDEIDRAILR…LINPFKAGYE (62 aa). The H-T-H motif DNA-binding region spans 31–50; it reads YSEISRRINVPESTVRARVN.

This is an uncharacterized protein from Pyrococcus abyssi (strain GE5 / Orsay).